The following is a 153-amino-acid chain: Interleukin-4 (153 aa).

The signal sequence occupies residues 1-24 (MGLTSQLLPPLFFLLACAGNFAHG). 3 disulfide bridges follow: Cys-27-Cys-151, Cys-48-Cys-89, and Cys-70-Cys-123. Asn-62 carries N-linked (GlcNAc...) asparagine glycosylation.

The protein belongs to the IL-4/IL-13 family.

It is found in the secreted. In terms of biological role, participates in at least several B-cell activation processes as well as of other cell types. It is a costimulator of DNA-synthesis. It induces the expression of class II MHC molecules on resting B-cells. It enhances both secretion and cell surface expression of IgE and IgG1. It also regulates the expression of the low affinity Fc receptor for IgE (CD23) on both lymphocytes and monocytes. Positively regulates IL31RA expression in macrophages. Stimulates autophagy in dendritic cells by interfering with mTORC1 signaling and through the induction of RUFY4. The polypeptide is Interleukin-4 (IL4) (Papio anubis (Olive baboon)).